The primary structure comprises 79 residues: Acyl carrier protein (79 aa).

The Carrier domain occupies 2–77 (SDVAERVKKI…DAIDFIKANA (76 aa)). O-(pantetheine 4'-phosphoryl)serine is present on S37.

This sequence belongs to the acyl carrier protein (ACP) family. Post-translationally, 4'-phosphopantetheine is transferred from CoA to a specific serine of apo-ACP by AcpS. This modification is essential for activity because fatty acids are bound in thioester linkage to the sulfhydryl of the prosthetic group.

Its subcellular location is the cytoplasm. It participates in lipid metabolism; fatty acid biosynthesis. In terms of biological role, carrier of the growing fatty acid chain in fatty acid biosynthesis. The chain is Acyl carrier protein from Azospirillum brasilense.